Here is a 388-residue protein sequence, read N- to C-terminus: Dual-specificity RNA methyltransferase RlmN (388 aa).

The active-site Proton acceptor is Glu109. The 240-residue stretch at Glu115–Asp354 folds into the Radical SAM core domain. A disulfide bond links Cys122 and Cys359. [4Fe-4S] cluster contacts are provided by Cys129, Cys133, and Cys136. Residues Gly183–Glu184, Ser215, Ser237–His239, and Asn316 contribute to the S-adenosyl-L-methionine site. Cys359 functions as the S-methylcysteine intermediate in the catalytic mechanism.

This sequence belongs to the radical SAM superfamily. RlmN family. It depends on [4Fe-4S] cluster as a cofactor.

The protein localises to the cytoplasm. The catalysed reaction is adenosine(2503) in 23S rRNA + 2 reduced [2Fe-2S]-[ferredoxin] + 2 S-adenosyl-L-methionine = 2-methyladenosine(2503) in 23S rRNA + 5'-deoxyadenosine + L-methionine + 2 oxidized [2Fe-2S]-[ferredoxin] + S-adenosyl-L-homocysteine. It catalyses the reaction adenosine(37) in tRNA + 2 reduced [2Fe-2S]-[ferredoxin] + 2 S-adenosyl-L-methionine = 2-methyladenosine(37) in tRNA + 5'-deoxyadenosine + L-methionine + 2 oxidized [2Fe-2S]-[ferredoxin] + S-adenosyl-L-homocysteine. Functionally, specifically methylates position 2 of adenine 2503 in 23S rRNA and position 2 of adenine 37 in tRNAs. m2A2503 modification seems to play a crucial role in the proofreading step occurring at the peptidyl transferase center and thus would serve to optimize ribosomal fidelity. The polypeptide is Dual-specificity RNA methyltransferase RlmN (Salmonella typhi).